Here is a 676-residue protein sequence, read N- to C-terminus: Envelope glycoprotein (676 aa).

The N-terminal stretch at 1–32 (MEGLSLLQLPRDKFRKSSFFVWVIILFQKAFS) is a signal peptide. Over 33–650 (MPLGVVTNST…DDNWWTGWRQ (618 aa)) the chain is Extracellular. N40 is a glycosylation site (N-linked (GlcNAc...) asparagine; by host). 5 disulfides stabilise this stretch: C53–C609, C108–C135, C121–C147, C511–C556, and C601–C608. The segment at 54–201 (KDHLASTDQL…TFLQSPPIRE (148 aa)) is receptor-binding. Residues N204, N208, N238, N257, N268, N296, and N314 are each glycosylated (N-linked (GlcNAc...) asparagine; by host). Residues 305–485 (ELSFETLSLN…STSNGLITST (181 aa)) form a mucin-like region region. A disordered region spans residues 313 to 351 (LNETEDDDATSSRTTKGRISDRATRKYSDLVPKDSPGMV). Over residues 330–344 (RISDRATRKYSDLVP) the composition is skewed to basic and acidic residues. N366 carries an N-linked (GlcNAc...) asparagine; by host glycan. Positions 406–458 (SSSQILSSSPTMAPSPETQTSTTYTPKLPVMTTEESTTPPRNSPGSTTEAPTL) are disordered. 2 stretches are compositionally biased toward polar residues: residues 415–430 (PTMA…TTYT) and 438–458 (TEES…APTL). N-linked (GlcNAc...) asparagine; by host glycosylation is present at N463. Residues 524 to 539 (HNAAGIAWIPYFGPGA) are fusion peptide. Positions 554–595 (LVCGLRQLANETTQALQLFLRATTELRTYTILNRKAIDFLLR) form a coiled coil. Residue N563 is glycosylated (N-linked (GlcNAc...) asparagine; by host). A coiled-coil region spans residues 615 to 634 (WTKNITDKINQIIHDFIDNP). N618 carries N-linked (GlcNAc...) asparagine; by host glycosylation. Residues 651–671 (WIPAGIGITGIIIAIIALLCV) traverse the membrane as a helical segment. Residues C670 and C672 are each lipidated (S-palmitoyl cysteine; by host). Topologically, residues 672-676 (CKLLC) are cytoplasmic.

The protein belongs to the filoviruses glycoprotein family. Homotrimer; each monomer consists of a GP1 and a GP2 subunit linked by disulfide bonds. The resulting peplomers (GP1,2) protrude from the virus surface as spikes. Interacts with host integrin alpha-V/ITGAV. Interacts with host CLEC10A. Binds also to host CD209 and CLEC4M/DC-SIGN(R). Interacts with host FOLR1. Interacts with BST2; this interaction inhibits the antiviral effect of BST2 and this allows viral release from infected cells. Interacts with host FCN1; this interaction enhances viral entry. Interacts with host TLR4; this interaction induces cell death in T-lymphocytes or proinflammatory cytokines and SOCS1 production in monocytes. In terms of assembly, interacts with host entry receptor NPC1. As to quaternary structure, GP1 and GP2delta are part of GP1,2delta soluble complexes released by ectodomain shedding. The signal peptide region modulates GP's high mannose glycosylation, thereby determining the efficiency of the interactions with DC-SIGN(R). Post-translationally, N-glycosylated. In terms of processing, O-glycosylated in the mucin-like region. Palmitoylation of GP2 is not required for its function. Post-translationally, specific enzymatic cleavages in vivo yield mature proteins. The precursor is processed into GP1 and GP2 by host cell furin in the trans Golgi, and maybe by other host proteases, to yield the mature GP1 and GP2 proteins. The cleavage site corresponds to the furin optimal cleavage sequence [KR]-X-[KR]-R. This cleavage does not seem to be required for function. After the internalization of the virus into cell endosomes, GP1 C-terminus is removed by the endosomal proteases cathepsin B, cathepsin L, or both, leaving a 19-kDa N-terminal fragment which is further digested by cathepsin B. Proteolytic processing of GP1,2 by host ADAM17 can remove the transmembrane anchor of GP2 and leads to shedding of complexes consisting in GP1 and truncated GP2 (GP1,2delta).

It localises to the virion membrane. The protein resides in the host cell membrane. It is found in the secreted. Its function is as follows. Trimeric GP1,2 complexes form the virion surface spikes and mediate the viral entry processes, with GP1 acting as the receptor-binding subunit and GP2 as the membrane fusion subunit. At later times of infection, down-regulates the expression of various host cell surface molecules that are essential for immune surveillance and cell adhesion. Down-modulates several integrins including ITGA1, ITGA2, ITGA3, ITGA4, ITGA5, ITGA6, ITGAV and ITGB1. This decrease in cell adhesion molecules may lead to cell detachment, contributing to the disruption of blood vessel integrity and hemorrhages developed during infection (cytotoxicity). Interacts with host TLR4 and thereby stimulates the differentiation and activation of monocytes leading to bystander death of T-lymphocytes. Down-regulates as well the function of host natural killer cells. Counteracts the antiviral effect of host BST2/tetherin that restricts release of progeny virions from infected cells. However, cooperates with VP40 and host BST2 to activate canonical NF-kappa-B pathway in a manner dependent on neddylation. Functions as a decoy for anti-GP1,2 antibodies thereby contributing to viral immune evasion. Interacts and activates host macrophages and dendritic cells inducing up-regulation of cytokine transcription. This effect is mediated throught activation of host TLR4. Functionally, responsible for binding to the receptor(s) on target cells. Interacts with CD209/DC-SIGN and CLEC4M/DC-SIGNR which act as cofactors for virus entry into dendritic cells (DCs) and endothelial cells. Binding to the macrophage specific lectin CLEC10A also seem to enhance virus infectivity. Interaction with FOLR1/folate receptor alpha may be a cofactor for virus entry in some cell types, although results are contradictory. Members of the Tyro3 receptor tyrosine kinase family also seem to be cell entry factors in filovirus infection. Once attached, the virions are internalized through clathrin-dependent endocytosis and/or macropinocytosis. After internalization of the virus into the endosomes of the host cell, proteolysis of GP1 by two cysteine proteases, CTSB/cathepsin B and CTSL/cathepsin L removes the glycan cap and allows GP1 binding to the host entry receptor NPC1. NPC1-binding, Ca(2+) and acidic pH induce a conformational change of GP2, which unmasks its fusion peptide and permit membranes fusion. In terms of biological role, acts as a class I viral fusion protein. Under the current model, the protein has at least 3 conformational states: pre-fusion native state, pre-hairpin intermediate state, and post-fusion hairpin state. During viral and target cell membrane fusion, the coiled coil regions (heptad repeats) assume a trimer-of-hairpins structure, positioning the fusion peptide in close proximity to the C-terminal region of the ectodomain. The formation of this structure appears to drive apposition and subsequent fusion of viral and target cell membranes. Responsible for penetration of the virus into the cell cytoplasm by mediating the fusion of the membrane of the endocytosed virus particle with the endosomal membrane. Low pH in endosomes induces an irreversible conformational change in GP2, releasing the fusion hydrophobic peptide. This Epomops franqueti (Franquet's epauletted fruit bat) protein is Envelope glycoprotein (GP).